Here is a 314-residue protein sequence, read N- to C-terminus: MKKGINRVVLVGTGAVGCSYAYSMINQGVAEEFVLVDVNEAKAEGEAMDLSHAVPFSPSPTKVWSGSYADCKDADLVVITAGLPQKPGETRLDLVEKNTKIFKQIVRGIMDSGFDGIFLIATNPVDILTYVTWKESGLPKERVIGSGTTLDSARFRYMLGDYLDVDPRNVHAYIVGEHGDTELPVWSHATIGVQKLETILANNEQYKQEDLDKIFENVRDAAYQVIERKGATYYGIGMSLLRVTKAILNNENSVLTVSAYLEGQYGEKDAYVGVPAVINREGVREIVELELNEDEKAKFAHSVKVLKETMAPVL.

NAD(+) is bound by residues Val16, Asp37, Lys42, Tyr68, and 82–83 (GL). Residues Gln85, Arg91, and 123-126 (NPVD) each bind substrate. NAD(+)-binding positions include 121–123 (ATN) and Ser146. 151-154 (DSAR) serves as a coordination point for substrate. Arg156 and His171 together coordinate beta-D-fructose 1,6-bisphosphate. Catalysis depends on His178, which acts as the Proton acceptor. Residue Tyr223 is modified to Phosphotyrosine. Residue Thr232 participates in substrate binding.

The protein belongs to the LDH/MDH superfamily. LDH family. Homotetramer.

Its subcellular location is the cytoplasm. It carries out the reaction (S)-lactate + NAD(+) = pyruvate + NADH + H(+). It functions in the pathway fermentation; pyruvate fermentation to lactate; (S)-lactate from pyruvate: step 1/1. Allosterically activated by fructose 1,6-bisphosphate (FBP). Its function is as follows. Catalyzes the conversion of lactate to pyruvate. This is L-lactate dehydrogenase 2 from Bacillus cereus (strain ATCC 14579 / DSM 31 / CCUG 7414 / JCM 2152 / NBRC 15305 / NCIMB 9373 / NCTC 2599 / NRRL B-3711).